Here is a 356-residue protein sequence, read N- to C-terminus: S-adenosylmethionine:tRNA ribosyltransferase-isomerase (356 aa).

This sequence belongs to the QueA family. In terms of assembly, monomer.

The protein localises to the cytoplasm. The enzyme catalyses 7-aminomethyl-7-carbaguanosine(34) in tRNA + S-adenosyl-L-methionine = epoxyqueuosine(34) in tRNA + adenine + L-methionine + 2 H(+). It participates in tRNA modification; tRNA-queuosine biosynthesis. Transfers and isomerizes the ribose moiety from AdoMet to the 7-aminomethyl group of 7-deazaguanine (preQ1-tRNA) to give epoxyqueuosine (oQ-tRNA). The sequence is that of S-adenosylmethionine:tRNA ribosyltransferase-isomerase from Xanthomonas campestris pv. campestris (strain 8004).